The following is a 262-amino-acid chain: TLC domain-containing protein 4-B (262 aa).

Transmembrane regions (helical) follow at residues 6–26, 53–73, 90–110, 122–142, 177–197, and 218–238; these read PLTVFISVTSLAVFQFLFHVG, TVSSFHALVVGCFCLYILVYD, LNVAVTSGYLISDLLLIIYYW, HLAALYACYYVLGEGMLPYFG, GVLMTISFFIVRIAVIPIYYG, and AWIISSVSLDIMNVMWMIKIA. The region spanning 44-246 is the TLC domain; that stretch reads RQKIEWNSRT…IAKGCYKVLY (203 aa).

This sequence belongs to the TLCD4 family.

The protein resides in the membrane. The protein is TLC domain-containing protein 4-B (tlcd4-b) of Xenopus laevis (African clawed frog).